Consider the following 322-residue polypeptide: Ribonuclease Z (322 aa).

7 residues coordinate Zn(2+): His-62, His-64, Asp-66, His-67, His-139, Asp-210, and His-268. The active-site Proton acceptor is Asp-66.

This sequence belongs to the RNase Z family. As to quaternary structure, homodimer. The cofactor is Zn(2+).

The enzyme catalyses Endonucleolytic cleavage of RNA, removing extra 3' nucleotides from tRNA precursor, generating 3' termini of tRNAs. A 3'-hydroxy group is left at the tRNA terminus and a 5'-phosphoryl group is left at the trailer molecule.. In terms of biological role, zinc phosphodiesterase, which displays some tRNA 3'-processing endonuclease activity. Probably involved in tRNA maturation, by removing a 3'-trailer from precursor tRNA. The chain is Ribonuclease Z from Nostoc sp. (strain PCC 7120 / SAG 25.82 / UTEX 2576).